Consider the following 446-residue polypeptide: Protein adenylyltransferase FICD (446 aa).

Over 1–18 (MAVTECEWASLGSRIGLR) the chain is Cytoplasmic. Residues 19–39 (AALVLLSGSLLVVLFPLSGLE) form a helical; Signal-anchor for type II membrane protein membrane-spanning segment. The Lumenal portion of the chain corresponds to 40-446 (HQYRTALNIL…ECKQTITIKT (407 aa)). 2 TPR repeats span residues 94–127 (AKAA…DPDH) and 128–161 (VDAL…SPHN). Positions 218 to 223 (TVAIEG) match the Inhibitory (S/T)XXXE(G/N) motif motif. Glu-222 lines the ATP pocket. Asn-263 is a glycosylation site (N-linked (GlcNAc...) asparagine). One can recognise a Fido domain in the interval 273-408 (VTIDNILEIH…VRPFIRFIAK (136 aa)). ATP is bound at residue 304–307 (VGHH). The active site involves His-351. Residues 355–362 (DGNGRTSR), 387–388 (YY), and Asn-395 each bind ATP.

Belongs to the fic family. As to quaternary structure, homodimer. Mg(2+) is required as a cofactor. Mn(2+) serves as cofactor.

The protein localises to the endoplasmic reticulum membrane. The catalysed reaction is L-tyrosyl-[protein] + ATP = O-(5'-adenylyl)-L-tyrosyl-[protein] + diphosphate. It carries out the reaction 3-O-(5'-adenylyl)-L-threonyl-[protein] + H2O = L-threonyl-[protein] + AMP + H(+). The enzyme catalyses L-threonyl-[protein] + ATP = 3-O-(5'-adenylyl)-L-threonyl-[protein] + diphosphate. With respect to regulation, the side chain of Glu-222 determines which of the two opposing activities (AMPylase or de-AMPylase) will take place. In response to endoplasmic reticulum stress, mediates de-AMPylase activity. Adenylyltransferase activity is inhibited by the inhibitory helix present at the N-terminus: Glu-222 binds ATP and competes with ATP-binding at Arg-362, thereby preventing adenylyltransferase activity. In unstressed cells, disengagement of Glu-222 promotes adenylyltransferase activity. Activation dissociates ATP-binding from Glu-222, allowing ordered binding of the entire ATP moiety with the alpha-phosphate in an orientation that is productive for accepting an incoming target hydroxyl side chain. In terms of biological role, protein that can both mediate the addition of adenosine 5'-monophosphate (AMP) to specific residues of target proteins (AMPylation), and the removal of the same modification from target proteins (de-AMPylation), depending on the context. The side chain of Glu-222 determines which of the two opposing activities (AMPylase or de-AMPylase) will take place. Acts as a key regulator of the ERN1/IRE1-mediated unfolded protein response (UPR) by mediating AMPylation or de-AMPylation of HSPA5/BiP. In unstressed cells, acts as an adenylyltransferase by mediating AMPylation of HSPA5/BiP at 'Thr-518', thereby inactivating it. In response to endoplasmic reticulum stress, acts as a phosphodiesterase by mediating removal of ATP (de-AMPylation) from HSPA5/BiP at 'Thr-518', leading to restore HSPA5/BiP activity. In Xenopus tropicalis (Western clawed frog), this protein is Protein adenylyltransferase FICD.